A 156-amino-acid chain; its full sequence is Small ribosomal subunit protein uS7 (156 aa).

Belongs to the universal ribosomal protein uS7 family. In terms of assembly, part of the 30S ribosomal subunit. Contacts proteins S9 and S11.

In terms of biological role, one of the primary rRNA binding proteins, it binds directly to 16S rRNA where it nucleates assembly of the head domain of the 30S subunit. Is located at the subunit interface close to the decoding center, probably blocks exit of the E-site tRNA. The protein is Small ribosomal subunit protein uS7 of Thermosynechococcus vestitus (strain NIES-2133 / IAM M-273 / BP-1).